We begin with the raw amino-acid sequence, 493 residues long: Protein nucleotidyltransferase YdiU (493 aa).

Glycine 94, glycine 96, arginine 97, lysine 117, aspartate 129, glycine 130, arginine 180, and arginine 187 together coordinate ATP. Catalysis depends on aspartate 256, which acts as the Proton acceptor. Residues asparagine 257 and aspartate 266 each coordinate Mg(2+). Aspartate 266 is an ATP binding site.

The protein belongs to the SELO family. The cofactor is Mg(2+). Mn(2+) is required as a cofactor.

The catalysed reaction is L-seryl-[protein] + ATP = 3-O-(5'-adenylyl)-L-seryl-[protein] + diphosphate. It carries out the reaction L-threonyl-[protein] + ATP = 3-O-(5'-adenylyl)-L-threonyl-[protein] + diphosphate. The enzyme catalyses L-tyrosyl-[protein] + ATP = O-(5'-adenylyl)-L-tyrosyl-[protein] + diphosphate. It catalyses the reaction L-histidyl-[protein] + UTP = N(tele)-(5'-uridylyl)-L-histidyl-[protein] + diphosphate. The catalysed reaction is L-seryl-[protein] + UTP = O-(5'-uridylyl)-L-seryl-[protein] + diphosphate. It carries out the reaction L-tyrosyl-[protein] + UTP = O-(5'-uridylyl)-L-tyrosyl-[protein] + diphosphate. Its function is as follows. Nucleotidyltransferase involved in the post-translational modification of proteins. It can catalyze the addition of adenosine monophosphate (AMP) or uridine monophosphate (UMP) to a protein, resulting in modifications known as AMPylation and UMPylation. The protein is Protein nucleotidyltransferase YdiU of Hahella chejuensis (strain KCTC 2396).